The sequence spans 311 residues: NAD kinase (311 aa).

Residue aspartate 89 is the Proton acceptor of the active site. NAD(+) contacts are provided by residues 89-90 (DG), arginine 94, 163-164 (NE), aspartate 193, and 204-209 (TAYAFS).

The protein belongs to the NAD kinase family. A divalent metal cation is required as a cofactor.

It localises to the cytoplasm. It catalyses the reaction NAD(+) + ATP = ADP + NADP(+) + H(+). Functionally, involved in the regulation of the intracellular balance of NAD and NADP, and is a key enzyme in the biosynthesis of NADP. Catalyzes specifically the phosphorylation on 2'-hydroxyl of the adenosine moiety of NAD to yield NADP. In Mycobacterium leprae (strain Br4923), this protein is NAD kinase.